A 658-amino-acid chain; its full sequence is Glycogen debranching enzyme (658 aa).

The active-site Nucleophile is Asp-336. Catalysis depends on Glu-371, which acts as the Proton donor. A disordered region spans residues 459–484 (EANGEENRDGTNSNYSDNHGKEGLGG).

Belongs to the glycosyl hydrolase 13 family.

It catalyses the reaction Hydrolysis of (1-&gt;6)-alpha-D-glucosidic linkages to branches with degrees of polymerization of three or four glucose residues in limit dextrin.. The protein operates within glycan degradation; glycogen degradation. Its function is as follows. Removes maltotriose and maltotetraose chains that are attached by 1,6-alpha-linkage to the limit dextrin main chain, generating a debranched limit dextrin. In Salmonella choleraesuis (strain SC-B67), this protein is Glycogen debranching enzyme.